The primary structure comprises 415 residues: Peptide chain release factor subunit 1 (415 aa).

Belongs to the eukaryotic release factor 1 family. In terms of assembly, heterodimer of two subunits, one of which binds GTP.

It is found in the cytoplasm. Directs the termination of nascent peptide synthesis (translation) in response to the termination codons UAA, UAG and UGA. This is Peptide chain release factor subunit 1 from Thermococcus kodakarensis (strain ATCC BAA-918 / JCM 12380 / KOD1) (Pyrococcus kodakaraensis (strain KOD1)).